The sequence spans 498 residues: MEESSMAQASLICLLLSFSIIMLSNAADISIDCGSSSSHIDADNRTWVGDTDFVATGLTSKFVPFSKFPAELTTLRYFPTGETNCYTNIPVEKGGKVLVRTRFLYGDYDEESTYPTFDVVYDGKHRYSVVTTTFETVTESEAIFIPENGNISVCFFRTLSSKTPFVSTIEVRRLDDSMYTDLGPKEGFILQQRIAYGAQELVRFPYDPYDRIWMPASVFASHLTSSATSIDTTGADNRPPEIILRTSWSQKDMAFYDIKLPFSGVTFYIVIYFSEPLSLGSDQKRSFNVYYEDKQVGSDLIVPPFGAVTQASLRDVVKTELAYLTFEATPDSTLDPLINALELYVISNSGGSGNGTNSTSTSGGGSPSPGGGSGSPPSTGGGSGSPPSTGGGGGSPSKGGGGGKSGGSNNGDGGTNKASEDEKSADSSGKSGEEKSSSNLALPLGISLPTLLSLGAGGWGVWKYFIKPRRHPESELPLKQNISLQVNMGNATVVNAGQ.

Positions 1 to 26 are cleaved as a signal peptide; that stretch reads MEESSMAQASLICLLLSFSIIMLSNA. Over 27–441 the chain is Extracellular; that stretch reads ADISIDCGSS…GEEKSSSNLA (415 aa). Asn-44, Asn-150, Asn-354, and Asn-357 each carry an N-linked (GlcNAc...) asparagine glycan. Residues 351–439 are disordered; it reads GSGNGTNSTS…KSGEEKSSSN (89 aa). Residues 362-414 are compositionally biased toward gly residues; sequence SGGGSPSPGGGSGSPPSTGGGSGSPPSTGGGGGSPSKGGGGGKSGGSNNGDGG. A compositionally biased stretch (basic and acidic residues) spans 418–436; it reads ASEDEKSADSSGKSGEEKS. A helical membrane pass occupies residues 442-462; the sequence is LPLGISLPTLLSLGAGGWGVW. Over 463 to 498 the chain is Cytoplasmic; it reads KYFIKPRRHPESELPLKQNISLQVNMGNATVVNAGQ.

It is found in the membrane. This is an uncharacterized protein from Arabidopsis thaliana (Mouse-ear cress).